The following is a 187-amino-acid chain: Large ribosomal subunit protein uL5 (187 aa).

It belongs to the universal ribosomal protein uL5 family. Part of the 50S ribosomal subunit; part of the 5S rRNA/L5/L18/L25 subcomplex. Contacts the 5S rRNA and the P site tRNA. Forms a bridge to the 30S subunit in the 70S ribosome.

Functionally, this is one of the proteins that bind and probably mediate the attachment of the 5S RNA into the large ribosomal subunit, where it forms part of the central protuberance. In the 70S ribosome it contacts protein S13 of the 30S subunit (bridge B1b), connecting the 2 subunits; this bridge is implicated in subunit movement. Contacts the P site tRNA; the 5S rRNA and some of its associated proteins might help stabilize positioning of ribosome-bound tRNAs. This is Large ribosomal subunit protein uL5 from Mycobacterium bovis (strain BCG / Tokyo 172 / ATCC 35737 / TMC 1019).